Reading from the N-terminus, the 415-residue chain is Sensor protein kinase WalK (415 aa).

Positions 11 to 63 (RTITKPITDMRNQTVEMSRGNYTQRVKIYGNDEIGELALAFNNLSKRVQEAQA) constitute an HAMP domain. One can recognise a PAS domain in the interval 68–138 (EKRRLDSVIT…EIQENNDSFL (71 aa)). Residues His-78, Asp-81, His-171, and Glu-175 each coordinate Zn(2+). The PAC domain maps to 121–185 (LEDEFKLEEI…QQQVERERRE (65 aa)). One can recognise a Histidine kinase domain in the interval 189–407 (NVSHELRTPL…SIFITLPCEV (219 aa)). Phosphohistidine; by autocatalysis is present on His-192.

As to quaternary structure, forms homodimers. Forms homooligomers. NH4(+) is required as a cofactor. Post-translationally, autophosphorylated.

It is found in the cell membrane. The enzyme catalyses ATP + protein L-histidine = ADP + protein N-phospho-L-histidine.. By zinc. Zinc-binding negatively regulates WalK kinase activity and thus autophosphorylation. Member of the two-component regulatory system WalK/WalR that regulates genes involved in cell wall metabolism, virulence regulation, biofilm production, oxidative stress resistance and antibiotic resistance via direct or indirect regulation of autolysins. Functions as a sensor protein kinase which is autophosphorylated at a histidine residue in the dimerization domain and transfers its phosphate group to the conserved aspartic acid residue in the regulatory domain of WalR. In turn, WalR binds to the upstream promoter regions of the target genes to positively and negatively regulate their expression. The chain is Sensor protein kinase WalK (walK) from Staphylococcus aureus.